The following is a 141-amino-acid chain: Nucleoside diphosphate kinase (141 aa).

ATP contacts are provided by Lys-9, Phe-57, Arg-85, Thr-91, Arg-102, and Asn-112. The active-site Pros-phosphohistidine intermediate is His-115.

The protein belongs to the NDK family. Homotetramer. Requires Mg(2+) as cofactor.

The protein resides in the cytoplasm. It catalyses the reaction a 2'-deoxyribonucleoside 5'-diphosphate + ATP = a 2'-deoxyribonucleoside 5'-triphosphate + ADP. The enzyme catalyses a ribonucleoside 5'-diphosphate + ATP = a ribonucleoside 5'-triphosphate + ADP. In terms of biological role, major role in the synthesis of nucleoside triphosphates other than ATP. The ATP gamma phosphate is transferred to the NDP beta phosphate via a ping-pong mechanism, using a phosphorylated active-site intermediate. This chain is Nucleoside diphosphate kinase, found in Chlamydia trachomatis serovar A (strain ATCC VR-571B / DSM 19440 / HAR-13).